A 1384-amino-acid polypeptide reads, in one-letter code: DNA-directed RNA polymerase subunit beta (1384 aa).

The protein belongs to the RNA polymerase beta chain family. The RNAP catalytic core consists of 2 alpha, 1 beta, 1 beta' and 1 omega subunit. When a sigma factor is associated with the core the holoenzyme is formed, which can initiate transcription.

It carries out the reaction RNA(n) + a ribonucleoside 5'-triphosphate = RNA(n+1) + diphosphate. DNA-dependent RNA polymerase catalyzes the transcription of DNA into RNA using the four ribonucleoside triphosphates as substrates. This Stenotrophomonas maltophilia (strain R551-3) protein is DNA-directed RNA polymerase subunit beta.